The chain runs to 335 residues: Zinc-type alcohol dehydrogenase-like protein SAR2277 (335 aa).

The protein belongs to the zinc-containing alcohol dehydrogenase family. Quinone oxidoreductase subfamily.

The chain is Zinc-type alcohol dehydrogenase-like protein SAR2277 from Staphylococcus aureus (strain MRSA252).